Reading from the N-terminus, the 72-residue chain is Cytochrome c oxidase subunit 8C, mitochondrial (72 aa).

Residues M1 to S29 constitute a mitochondrion transit peptide. At H30 to S40 the chain is on the mitochondrial matrix side. Residues P41–S64 form a helical membrane-spanning segment. Residues S65–E72 lie on the Mitochondrial intermembrane side of the membrane.

This sequence belongs to the cytochrome c oxidase VIII family. Component of the cytochrome c oxidase (complex IV, CIV), a multisubunit enzyme composed of 14 subunits. The complex is composed of a catalytic core of 3 subunits MT-CO1, MT-CO2 and MT-CO3, encoded in the mitochondrial DNA, and 11 supernumerary subunits COX4I, COX5A, COX5B, COX6A, COX6B, COX6C, COX7A, COX7B, COX7C, COX8 and NDUFA4, which are encoded in the nuclear genome. The complex exists as a monomer or a dimer and forms supercomplexes (SCs) in the inner mitochondrial membrane with NADH-ubiquinone oxidoreductase (complex I, CI) and ubiquinol-cytochrome c oxidoreductase (cytochrome b-c1 complex, complex III, CIII), resulting in different assemblies (supercomplex SCI(1)III(2)IV(1) and megacomplex MCI(2)III(2)IV(2)).

The protein localises to the mitochondrion inner membrane. The protein operates within energy metabolism; oxidative phosphorylation. Component of the cytochrome c oxidase, the last enzyme in the mitochondrial electron transport chain which drives oxidative phosphorylation. The respiratory chain contains 3 multisubunit complexes succinate dehydrogenase (complex II, CII), ubiquinol-cytochrome c oxidoreductase (cytochrome b-c1 complex, complex III, CIII) and cytochrome c oxidase (complex IV, CIV), that cooperate to transfer electrons derived from NADH and succinate to molecular oxygen, creating an electrochemical gradient over the inner membrane that drives transmembrane transport and the ATP synthase. Cytochrome c oxidase is the component of the respiratory chain that catalyzes the reduction of oxygen to water. Electrons originating from reduced cytochrome c in the intermembrane space (IMS) are transferred via the dinuclear copper A center (CU(A)) of subunit 2 and heme A of subunit 1 to the active site in subunit 1, a binuclear center (BNC) formed by heme A3 and copper B (CU(B)). The BNC reduces molecular oxygen to 2 water molecules using 4 electrons from cytochrome c in the IMS and 4 protons from the mitochondrial matrix. In Mus musculus (Mouse), this protein is Cytochrome c oxidase subunit 8C, mitochondrial (Cox8c).